The chain runs to 1556 residues: Pentafunctional AROM polypeptide (1556 aa).

The 3-dehydroquinate synthase stretch occupies residues 1-387 (MFAEGQIQKV…HEQKASSVAD (387 aa)). Residues 46 to 48 (DTN), 84 to 87 (ETSK), 115 to 117 (GGV), and aspartate 120 contribute to the NAD(+) site. A 7-phospho-2-dehydro-3-deoxy-D-arabino-heptonate-binding site is contributed by arginine 131. NAD(+) is bound at residue 140 to 141 (TT). 7-phospho-2-dehydro-3-deoxy-D-arabino-heptonate-binding residues include aspartate 147 and lysine 153. Lysine 162 serves as a coordination point for NAD(+). Asparagine 163 provides a ligand contact to 7-phospho-2-dehydro-3-deoxy-D-arabino-heptonate. NAD(+) is bound by residues 180–183 (FLET) and asparagine 191. Position 195 (glutamate 195) interacts with Zn(2+). 7-phospho-2-dehydro-3-deoxy-D-arabino-heptonate is bound by residues 195–198 (EVIK) and lysine 253. The Proton acceptor; for 3-dehydroquinate synthase activity role is filled by glutamate 263. Residues 267–271 (RNLLN) and histidine 274 contribute to the 7-phospho-2-dehydro-3-deoxy-D-arabino-heptonate site. Histidine 274 provides a ligand contact to Zn(2+). Histidine 278 serves as the catalytic Proton acceptor; for 3-dehydroquinate synthase activity. 7-phospho-2-dehydro-3-deoxy-D-arabino-heptonate-binding residues include histidine 290 and lysine 359. Position 290 (histidine 290) interacts with Zn(2+). The segment at 400–837 (VGEAPVGDKK…WDVLSGVFNV (438 aa)) is EPSP synthase. Residue cysteine 819 is the For EPSP synthase activity of the active site. The tract at residues 858–1049 (PSIFIVGMRG…HKDQFTSFLS (192 aa)) is shikimate kinase. 864 to 871 (GMRGAGKT) provides a ligand contact to ATP. The 3-dehydroquinase stretch occupies residues 1050–1266 (LTFPDVSIAA…AAPGQLSVEE (217 aa)). The active-site Proton acceptor; for 3-dehydroquinate dehydratase activity is the histidine 1171. Lysine 1200 functions as the Schiff-base intermediate with substrate; for 3-dehydroquinate dehydratase activity in the catalytic mechanism. Residues 1279–1556 (KNLSFFIVGT…EVGEKAVLGN (278 aa)) are shikimate dehydrogenase.

This sequence in the N-terminal section; belongs to the sugar phosphate cyclases superfamily. Dehydroquinate synthase family. In the 2nd section; belongs to the EPSP synthase family. The protein in the 3rd section; belongs to the shikimate kinase family. It in the 4th section; belongs to the type-I 3-dehydroquinase family. This sequence in the C-terminal section; belongs to the shikimate dehydrogenase family. Homodimer. Zn(2+) serves as cofactor.

Its subcellular location is the cytoplasm. The catalysed reaction is 7-phospho-2-dehydro-3-deoxy-D-arabino-heptonate = 3-dehydroquinate + phosphate. It catalyses the reaction 3-dehydroquinate = 3-dehydroshikimate + H2O. It carries out the reaction shikimate + NADP(+) = 3-dehydroshikimate + NADPH + H(+). The enzyme catalyses shikimate + ATP = 3-phosphoshikimate + ADP + H(+). The catalysed reaction is 3-phosphoshikimate + phosphoenolpyruvate = 5-O-(1-carboxyvinyl)-3-phosphoshikimate + phosphate. The protein operates within metabolic intermediate biosynthesis; chorismate biosynthesis; chorismate from D-erythrose 4-phosphate and phosphoenolpyruvate: step 2/7. It participates in metabolic intermediate biosynthesis; chorismate biosynthesis; chorismate from D-erythrose 4-phosphate and phosphoenolpyruvate: step 3/7. Its pathway is metabolic intermediate biosynthesis; chorismate biosynthesis; chorismate from D-erythrose 4-phosphate and phosphoenolpyruvate: step 4/7. It functions in the pathway metabolic intermediate biosynthesis; chorismate biosynthesis; chorismate from D-erythrose 4-phosphate and phosphoenolpyruvate: step 5/7. The protein operates within metabolic intermediate biosynthesis; chorismate biosynthesis; chorismate from D-erythrose 4-phosphate and phosphoenolpyruvate: step 6/7. Functionally, the AROM polypeptide catalyzes 5 consecutive enzymatic reactions in prechorismate polyaromatic amino acid biosynthesis. The sequence is that of Pentafunctional AROM polypeptide from Yarrowia lipolytica (strain CLIB 122 / E 150) (Yeast).